Reading from the N-terminus, the 532-residue chain is MEGDSYHNATTVNGTPVYHQPLERHRLWEVISIAAVTAVVSLITIVGNVLVMISFKVNSQLKTVNNYYLLSLACADLIIGIFSMNLYTTYILMGRWALGSLACDLWLALDYVASNASVMNLLVISFDRYFSITRPLTYRAKRTPKRAGVMIGLAWLISFILWAPAILCWQYLVGKRTVPLDECQIQFLSEPTITFGTAIAAFYIPVSVMTILYCRIYRETEKRTKDLADLQGSDSVTEAEKRKPAHRALFRSCLRCPRPTLAQRERNQTSWSSSRRSASTSGKPSQATDPSTNQAKAEQLTTCSSYPSSEDEDKPATDPVLQVVYKSRGKESPGEEFSSEDAEETFVKAQTEKHDSDTPNYFLSPAAAHRPKSQKCVAYKFRLVVKADGTQENNNGCHKVKIMPCSFPVAKEPSTKGLNPNPSHQMTKRKRMVLVKERKAAQTLSAILLAFIITWTPYNIMVLVSTFCDKCVPVTLWHLGYWLCYVNSTVNPICYALCNRTFRKTFKMLLLCRWKKKKVEEKLYWQGNSKLP.

The Extracellular segment spans residues 1-29 (MEGDSYHNATTVNGTPVYHQPLERHRLWE). Residue Asn8 is glycosylated (N-linked (GlcNAc...) asparagine). A helical membrane pass occupies residues 30–53 (VISIAAVTAVVSLITIVGNVLVMI). Residues 54-66 (SFKVNSQLKTVNN) are Cytoplasmic-facing. Residues 67 to 87 (YYLLSLACADLIIGIFSMNLY) form a helical membrane-spanning segment. The Extracellular segment spans residues 88–104 (TTYILMGRWALGSLACD). A disulfide bridge links Cys103 with Cys183. The helical transmembrane segment at 105–126 (LWLALDYVASNASVMNLLVISF) threads the bilayer. Over 127 to 146 (DRYFSITRPLTYRAKRTPKR) the chain is Cytoplasmic. Residues 147 to 169 (AGVMIGLAWLISFILWAPAILCW) form a helical membrane-spanning segment. Over 170–191 (QYLVGKRTVPLDECQIQFLSEP) the chain is Extracellular. A helical membrane pass occupies residues 192–214 (TITFGTAIAAFYIPVSVMTILYC). Over 215–443 (RIYRETEKRT…LVKERKAAQT (229 aa)) the chain is Cytoplasmic. A disordered region spans residues 262 to 365 (AQRERNQTSW…SDTPNYFLSP (104 aa)). Over residues 269-281 (TSWSSSRRSASTS) the composition is skewed to low complexity. Positions 282–308 (GKPSQATDPSTNQAKAEQLTTCSSYPS) are enriched in polar residues. The chain crosses the membrane as a helical span at residues 444 to 464 (LSAILLAFIITWTPYNIMVLV). Topologically, residues 465–478 (STFCDKCVPVTLWH) are extracellular. A helical membrane pass occupies residues 479–498 (LGYWLCYVNSTVNPICYALC). Residues 499-532 (NRTFRKTFKMLLLCRWKKKKVEEKLYWQGNSKLP) lie on the Cytoplasmic side of the membrane. Phosphothreonine is present on residues Thr501 and Thr505.

The protein belongs to the G-protein coupled receptor 1 family. Muscarinic acetylcholine receptor subfamily. CHRM5 sub-subfamily.

It localises to the cell membrane. The protein localises to the postsynaptic cell membrane. In terms of biological role, the muscarinic acetylcholine receptor mediates various cellular responses, including inhibition of adenylate cyclase, breakdown of phosphoinositides and modulation of potassium channels through the action of G proteins. Primary transducing effect is Pi turnover. The protein is Muscarinic acetylcholine receptor M5 (CHRM5) of Macaca mulatta (Rhesus macaque).